The primary structure comprises 494 residues: Probable cytochrome P450 313a4 (494 aa).

C440 contacts heme.

This sequence belongs to the cytochrome P450 family. It depends on heme as a cofactor.

It is found in the endoplasmic reticulum membrane. Its subcellular location is the microsome membrane. May be involved in the metabolism of insect hormones and in the breakdown of synthetic insecticides. The polypeptide is Probable cytochrome P450 313a4 (Cyp313a4) (Drosophila melanogaster (Fruit fly)).